We begin with the raw amino-acid sequence, 174 residues long: ATP synthase subunit delta (174 aa).

The protein belongs to the ATPase delta chain family. As to quaternary structure, F-type ATPases have 2 components, F(1) - the catalytic core - and F(0) - the membrane proton channel. F(1) has five subunits: alpha(3), beta(3), gamma(1), delta(1), epsilon(1). F(0) has three main subunits: a(1), b(2) and c(10-14). The alpha and beta chains form an alternating ring which encloses part of the gamma chain. F(1) is attached to F(0) by a central stalk formed by the gamma and epsilon chains, while a peripheral stalk is formed by the delta and b chains.

It localises to the cell inner membrane. Its function is as follows. F(1)F(0) ATP synthase produces ATP from ADP in the presence of a proton or sodium gradient. F-type ATPases consist of two structural domains, F(1) containing the extramembraneous catalytic core and F(0) containing the membrane proton channel, linked together by a central stalk and a peripheral stalk. During catalysis, ATP synthesis in the catalytic domain of F(1) is coupled via a rotary mechanism of the central stalk subunits to proton translocation. This protein is part of the stalk that links CF(0) to CF(1). It either transmits conformational changes from CF(0) to CF(1) or is implicated in proton conduction. In Francisella tularensis subsp. mediasiatica (strain FSC147), this protein is ATP synthase subunit delta.